Reading from the N-terminus, the 202-residue chain is Small ribosomal subunit protein uS4 (202 aa).

The S4 RNA-binding domain occupies 93–155; that stretch reads RRLDNVVRRV…ENLKNLYRGV (63 aa).

This sequence belongs to the universal ribosomal protein uS4 family. In terms of assembly, part of the 30S ribosomal subunit. Contacts protein S5. The interaction surface between S4 and S5 is involved in control of translational fidelity.

Its function is as follows. One of the primary rRNA binding proteins, it binds directly to 16S rRNA where it nucleates assembly of the body of the 30S subunit. In terms of biological role, with S5 and S12 plays an important role in translational accuracy. In Rhodopirellula baltica (strain DSM 10527 / NCIMB 13988 / SH1), this protein is Small ribosomal subunit protein uS4.